The following is a 217-amino-acid chain: Thymidylate kinase (217 aa).

7 to 14 contacts ATP; it reads GIDGAGKS.

Belongs to the thymidylate kinase family.

It carries out the reaction dTMP + ATP = dTDP + ADP. Phosphorylation of dTMP to form dTDP in both de novo and salvage pathways of dTTP synthesis. The protein is Thymidylate kinase of Pelodictyon phaeoclathratiforme (strain DSM 5477 / BU-1).